The primary structure comprises 325 residues: GMP reductase (325 aa).

Cys-174 serves as the catalytic Thioimidate intermediate. NADP(+) is bound at residue 203–226 (LIADGGIRTHGDIAKSIRFGATMV).

It belongs to the IMPDH/GMPR family. GuaC type 2 subfamily.

It catalyses the reaction IMP + NH4(+) + NADP(+) = GMP + NADPH + 2 H(+). Catalyzes the irreversible NADPH-dependent deamination of GMP to IMP. It functions in the conversion of nucleobase, nucleoside and nucleotide derivatives of G to A nucleotides, and in maintaining the intracellular balance of A and G nucleotides. This is GMP reductase from Pediococcus pentosaceus (strain ATCC 25745 / CCUG 21536 / LMG 10740 / 183-1w).